Reading from the N-terminus, the 150-residue chain is Large ribosomal subunit protein bL9 (150 aa).

It belongs to the bacterial ribosomal protein bL9 family.

Functionally, binds to the 23S rRNA. The polypeptide is Large ribosomal subunit protein bL9 (Enterococcus faecalis (strain ATCC 700802 / V583)).